The primary structure comprises 349 residues: N-acetyl-gamma-glutamyl-phosphate reductase (349 aa).

Cys-152 is an active-site residue.

Belongs to the NAGSA dehydrogenase family. Type 1 subfamily.

Its subcellular location is the cytoplasm. It catalyses the reaction N-acetyl-L-glutamate 5-semialdehyde + phosphate + NADP(+) = N-acetyl-L-glutamyl 5-phosphate + NADPH + H(+). Its pathway is amino-acid biosynthesis; L-arginine biosynthesis; N(2)-acetyl-L-ornithine from L-glutamate: step 3/4. Functionally, catalyzes the NADPH-dependent reduction of N-acetyl-5-glutamyl phosphate to yield N-acetyl-L-glutamate 5-semialdehyde. In Clavibacter sepedonicus (Clavibacter michiganensis subsp. sepedonicus), this protein is N-acetyl-gamma-glutamyl-phosphate reductase.